The sequence spans 375 residues: Proton-coupled zinc antiporter SLC30A8 (375 aa).

At 1-68 the chain is on the cytoplasmic side; sequence MKGPEKAYLV…QREQTSAKKK (68 aa). Zn(2+)-binding residues include H46, C47, and H48. The HCH Motif; seals regulatory zinc-binding pocket signature appears at 46 to 48; it reads HCH. A helical membrane pass occupies residues 69-89; the sequence is LCIASLICFVFISAEIVGGYI. Residues 90–98 are Lumenal, vesicle-facing; it reads AGSLAVVTD. A helical membrane pass occupies residues 99–119; the sequence is AAHLLVDLSSFFISLGSLWLS. Zn(2+)-binding residues include H101 and D105. At 120-135 the chain is on the cytoplasmic side; that stretch reads SKSSTMRLTFGWYRAE. Residues 136-156 form a helical membrane-spanning segment; that stretch reads ILGALMSIITIWLVTGVLVYL. Residues 157–170 lie on the Lumenal, vesicle side of the membrane; it reads AIERIIRPDYTIDG. The helical transmembrane segment at 171 to 191 threads the bilayer; sequence TVMLITSACALGANVVLALIL. The Cytoplasmic portion of the chain corresponds to 192-223; that stretch reads HQSGHGHSHAGGKHEHMASEYKPQTNASIRAA. A helical membrane pass occupies residues 224 to 244; that stretch reads FIHVIGDLFQSISVLISALII. The Zn(2+) site is built by H226 and D230. At 245–251 the chain is on the lumenal, vesicle side; that stretch reads YFKPEYK. Residues 252–272 traverse the membrane as a helical segment; it reads IADPICTFIFSIFVLITTVTV. Residues 273-375 lie on the Cytoplasmic side of the membrane; it reads LRDLLNILME…ECMFCYEPTQ (103 aa). Zn(2+)-binding residues include H307, H324, H351, E358, C367, and C370.

Belongs to the cation diffusion facilitator (CDF) transporter (TC 2.A.4) family. SLC30A subfamily. In terms of assembly, homodimer.

Its subcellular location is the cytoplasmic vesicle. The protein localises to the secretory vesicle membrane. The protein resides in the cell membrane. It catalyses the reaction Zn(2+)(in) + 2 H(+)(out) = Zn(2+)(out) + 2 H(+)(in). Proton-coupled zinc ion antiporter mediating the entry of zinc into the lumen of pancreatic beta cell secretory granules, thereby regulating insulin secretion. The chain is Proton-coupled zinc antiporter SLC30A8 (slc30a8) from Xenopus laevis (African clawed frog).